The chain runs to 149 residues: Secreted RxLR effector protein 17 (149 aa).

The signal sequence occupies residues 1–24 (MRLFYFSAMSVIGLLARNNMVVVA). A RxLR-dEER motif is present at residues 52–78 (RSLRTREKDIQDSTVAKDDAIKVEEDR).

The protein belongs to the RxLR effector family.

The protein resides in the secreted. Its subcellular location is the host cytoplasm. It localises to the host nucleus. Functionally, effector that acts as a broad suppressor of cell death to interrupt plant immunity. Inhibits cell death induced by cell death-inducing proteins, including the PAMP elicitor INF1 from P.infestans. This Plasmopara viticola (Downy mildew of grapevine) protein is Secreted RxLR effector protein 17.